The sequence spans 332 residues: Holliday junction branch migration complex subunit RuvB (332 aa).

A large ATPase domain (RuvB-L) region spans residues 1–182 (MNKNFIESNL…FAFTCRLEYY (182 aa)). ATP contacts are provided by residues L21, R22, G63, K66, T67, T68, 129–131 (EDF), R172, Y182, and R219. T67 lines the Mg(2+) pocket. Residues 183–253 (DPMILQKILL…VANRALTMLS (71 aa)) form a small ATPAse domain (RuvB-S) region. The interval 256 to 332 (EKGLDEMDKK…YQHIVGSSQR (77 aa)) is head domain (RuvB-H). DNA is bound by residues R311 and R316.

It belongs to the RuvB family. Homohexamer. Forms an RuvA(8)-RuvB(12)-Holliday junction (HJ) complex. HJ DNA is sandwiched between 2 RuvA tetramers; dsDNA enters through RuvA and exits via RuvB. An RuvB hexamer assembles on each DNA strand where it exits the tetramer. Each RuvB hexamer is contacted by two RuvA subunits (via domain III) on 2 adjacent RuvB subunits; this complex drives branch migration. In the full resolvosome a probable DNA-RuvA(4)-RuvB(12)-RuvC(2) complex forms which resolves the HJ.

It localises to the cytoplasm. The catalysed reaction is ATP + H2O = ADP + phosphate + H(+). Its function is as follows. The RuvA-RuvB-RuvC complex processes Holliday junction (HJ) DNA during genetic recombination and DNA repair, while the RuvA-RuvB complex plays an important role in the rescue of blocked DNA replication forks via replication fork reversal (RFR). RuvA specifically binds to HJ cruciform DNA, conferring on it an open structure. The RuvB hexamer acts as an ATP-dependent pump, pulling dsDNA into and through the RuvAB complex. RuvB forms 2 homohexamers on either side of HJ DNA bound by 1 or 2 RuvA tetramers; 4 subunits per hexamer contact DNA at a time. Coordinated motions by a converter formed by DNA-disengaged RuvB subunits stimulates ATP hydrolysis and nucleotide exchange. Immobilization of the converter enables RuvB to convert the ATP-contained energy into a lever motion, pulling 2 nucleotides of DNA out of the RuvA tetramer per ATP hydrolyzed, thus driving DNA branch migration. The RuvB motors rotate together with the DNA substrate, which together with the progressing nucleotide cycle form the mechanistic basis for DNA recombination by continuous HJ branch migration. Branch migration allows RuvC to scan DNA until it finds its consensus sequence, where it cleaves and resolves cruciform DNA. The chain is Holliday junction branch migration complex subunit RuvB from Protochlamydia amoebophila (strain UWE25).